We begin with the raw amino-acid sequence, 160 residues long: Cytosolic iron-sulfur assembly component 2A (160 aa).

Zn(2+) contacts are provided by His89, His123, Glu150, and Glu153.

The protein belongs to the MIP18 family. In terms of assembly, monomer and homodimer. Component of the CIA complex. Interacts with CIAO1. Interacts with IREB2. Interacts with APAF1. Substantially enriched in macrophages.

The protein localises to the cytoplasm. Component of the cytosolic iron-sulfur protein assembly (CIA) complex, a multiprotein complex that mediates the incorporation of iron-sulfur cluster into extramitochondrial Fe/S proteins. As a CIA complex component and in collaboration with CIAO1 specifically matures ACO1 and stabilizes IREB2, connecting cytosolic iron-sulfur protein maturation with cellular iron regulation. May play a role in chromosome segregation through establishment of sister chromatid cohesion. May induce apoptosis in collaboration with APAF1. This Homo sapiens (Human) protein is Cytosolic iron-sulfur assembly component 2A.